Here is a 254-residue protein sequence, read N- to C-terminus: Cytochrome c oxidase subunit 2 (254 aa).

Over 12 to 38 (DAPEPWQICYQDSATKIMSGIDKLTGE) the chain is Mitochondrial intermembrane. A helical transmembrane segment spans residues 39–59 (IFYYETLLLIIVGWVLISAII). At 60-73 (KYTKTELSYKYFNH) the chain is on the mitochondrial matrix side. The helical transmembrane segment at 74–94 (GTLIEILWTCSPAFILIAISF) threads the bilayer. Topologically, residues 95 to 248 (PSFKLLYLMD…KYLEWLNIHL (154 aa)) are mitochondrial intermembrane. Positions 182, 217, 219, 221, 225, and 228 each coordinate Cu cation. Glu-219 provides a ligand contact to Mg(2+).

Belongs to the cytochrome c oxidase subunit 2 family. As to quaternary structure, component of the cytochrome c oxidase (complex IV, CIV), a multisubunit enzyme composed of a catalytic core of 3 subunits and several supernumerary subunits. The complex exists as a monomer or a dimer and forms supercomplexes (SCs) in the inner mitochondrial membrane with ubiquinol-cytochrome c oxidoreductase (cytochrome b-c1 complex, complex III, CIII). Cu cation is required as a cofactor.

The protein resides in the mitochondrion inner membrane. It catalyses the reaction 4 Fe(II)-[cytochrome c] + O2 + 8 H(+)(in) = 4 Fe(III)-[cytochrome c] + 2 H2O + 4 H(+)(out). Functionally, component of the cytochrome c oxidase, the last enzyme in the mitochondrial electron transport chain which drives oxidative phosphorylation. The respiratory chain contains 3 multisubunit complexes succinate dehydrogenase (complex II, CII), ubiquinol-cytochrome c oxidoreductase (cytochrome b-c1 complex, complex III, CIII) and cytochrome c oxidase (complex IV, CIV), that cooperate to transfer electrons derived from NADH and succinate to molecular oxygen, creating an electrochemical gradient over the inner membrane that drives transmembrane transport and the ATP synthase. Cytochrome c oxidase is the component of the respiratory chain that catalyzes the reduction of oxygen to water. Electrons originating from reduced cytochrome c in the intermembrane space (IMS) are transferred via the dinuclear copper A center (CU(A)) of subunit 2 and heme A of subunit 1 to the active site in subunit 1, a binuclear center (BNC) formed by heme A3 and copper B (CU(B)). The BNC reduces molecular oxygen to 2 water molecules using 4 electrons from cytochrome c in the IMS and 4 protons from the mitochondrial matrix. The sequence is that of Cytochrome c oxidase subunit 2 from Zancudomyces culisetae (Gut fungus).